Consider the following 544-residue polypeptide: Chaperonin GroEL (544 aa).

Residues 29–32 (TLGP), 86–90 (DGTTT), glycine 413, 476–478 (NAL), and aspartate 492 contribute to the ATP site.

It belongs to the chaperonin (HSP60) family. As to quaternary structure, forms a cylinder of 14 subunits composed of two heptameric rings stacked back-to-back. Interacts with the co-chaperonin GroES.

It is found in the cytoplasm. It catalyses the reaction ATP + H2O + a folded polypeptide = ADP + phosphate + an unfolded polypeptide.. Functionally, together with its co-chaperonin GroES, plays an essential role in assisting protein folding. The GroEL-GroES system forms a nano-cage that allows encapsulation of the non-native substrate proteins and provides a physical environment optimized to promote and accelerate protein folding. The polypeptide is Chaperonin GroEL (Desulfitobacterium hafniense (strain DSM 10664 / DCB-2)).